The sequence spans 909 residues: UPF0182 protein H16_A1615 (909 aa).

Helical transmembrane passes span 16–36, 58–78, 114–134, 169–189, 205–225, 246–266, and 281–301; these read TWVV…GLVV, ALLF…SGWL, VAVL…AIAL, WLLL…GLRG, ATHG…SYWL, VHVG…AAAA, and AAAL…PALF.

The protein belongs to the UPF0182 family.

It localises to the cell membrane. The protein is UPF0182 protein H16_A1615 of Cupriavidus necator (strain ATCC 17699 / DSM 428 / KCTC 22496 / NCIMB 10442 / H16 / Stanier 337) (Ralstonia eutropha).